The primary structure comprises 223 residues: Probable transaldolase (223 aa).

Lys92 acts as the Schiff-base intermediate with substrate in catalysis.

This sequence belongs to the transaldolase family. Type 3B subfamily.

It localises to the cytoplasm. It catalyses the reaction D-sedoheptulose 7-phosphate + D-glyceraldehyde 3-phosphate = D-erythrose 4-phosphate + beta-D-fructose 6-phosphate. Its pathway is carbohydrate degradation; pentose phosphate pathway; D-glyceraldehyde 3-phosphate and beta-D-fructose 6-phosphate from D-ribose 5-phosphate and D-xylulose 5-phosphate (non-oxidative stage): step 2/3. Transaldolase is important for the balance of metabolites in the pentose-phosphate pathway. The chain is Probable transaldolase from Thermus thermophilus (strain ATCC BAA-163 / DSM 7039 / HB27).